Reading from the N-terminus, the 335-residue chain is N-lysine methyltransferase KMT5A-A (335 aa).

2 disordered regions span residues 1–91 (MGRG…EVEK) and 133–183 (LPPE…EIES). Residues 67 to 91 (SVTHHESKCLGKPSTETRKKAEVEK) are compositionally biased toward basic and acidic residues. The segment covering 145–161 (VKNKPLRKKTQRQKSPN) has biased composition (basic residues). The region spanning 199-320 (EGIKMHMITG…VGEELLYDYG (122 aa)) is the SET domain. S-adenosyl-L-methionine-binding positions include 209–211 (KGR), Y254, and 281–282 (NH).

Belongs to the class V-like SAM-binding methyltransferase superfamily. Histone-lysine methyltransferase family. PR/SET subfamily.

The protein localises to the nucleus. The protein resides in the chromosome. It catalyses the reaction L-lysyl(20)-[histone H4] + S-adenosyl-L-methionine = N(6)-methyl-L-lysyl(20)-[histone H4] + S-adenosyl-L-homocysteine + H(+). The enzyme catalyses L-lysyl-[protein] + S-adenosyl-L-methionine = N(6)-methyl-L-lysyl-[protein] + S-adenosyl-L-homocysteine + H(+). In terms of biological role, protein-lysine N-methyltransferase that monomethylates both histones and non-histone proteins. Specifically monomethylates 'Lys-20' of histone H4 (H4K20me1). H4K20me1 is enriched during mitosis and represents a specific tag for epigenetic transcriptional repression. Mainly functions in euchromatin regions, thereby playing a central role in the silencing of euchromatic genes. Required for cell proliferation, probably by contributing to the maintenance of proper higher-order structure of DNA during mitosis. Involved in chromosome condensation and proper cytokinesis. The protein is N-lysine methyltransferase KMT5A-A of Xenopus laevis (African clawed frog).